Consider the following 971-residue polypeptide: UPF0182 protein CMS1887 (971 aa).

Transmembrane regions (helical) follow at residues 16–36, 56–76, 108–128, 161–181, 205–225, 255–275, and 281–301; these read LAITAAIIAALVIAFFIFAGF, WGAGIALFFIGFLAMAIPVFV, LAMFAIPAVFGLFAGVSASSG, FYHAVVGFASAVVIISMLGVL, IQIAITAGVYFLLQGVSIWLD, TILAGIAVVVAVMFIITAAIG, and IIGTAGLIVASILIGTAYPAI. A compositionally biased stretch (polar residues) spans 687–702; the sequence is QDLWTTPNDPTATTEA. 2 disordered regions span residues 687-706 and 874-924; these read QDLWTTPNDPTATTEAGTPA and GATA…AQDV. Low complexity-rich tracts occupy residues 884-900 and 907-921; these read PTTPADGAAGDGSTDGA and STPTPAPTASPAAPA.

This sequence belongs to the UPF0182 family.

The protein localises to the cell membrane. This chain is UPF0182 protein CMS1887, found in Clavibacter sepedonicus (Clavibacter michiganensis subsp. sepedonicus).